Here is a 139-residue protein sequence, read N- to C-terminus: Hydrogenase maturation factor HypA (139 aa).

His-2 serves as a coordination point for Ni(2+). Positions 73, 76, 110, and 113 each coordinate Zn(2+).

Belongs to the HypA/HybF family.

Its function is as follows. Involved in the maturation of [NiFe] hydrogenases. Required for nickel insertion into the metal center of the hydrogenase. This chain is Hydrogenase maturation factor HypA, found in Thermococcus gammatolerans (strain DSM 15229 / JCM 11827 / EJ3).